Reading from the N-terminus, the 219-residue chain is Protein-L-isoaspartate O-methyltransferase 2 (219 aa).

Ser-67 is an active-site residue.

The protein belongs to the methyltransferase superfamily. L-isoaspartyl/D-aspartyl protein methyltransferase family.

The protein localises to the cytoplasm. The catalysed reaction is [protein]-L-isoaspartate + S-adenosyl-L-methionine = [protein]-L-isoaspartate alpha-methyl ester + S-adenosyl-L-homocysteine. In terms of biological role, catalyzes the methyl esterification of L-isoaspartyl residues in peptides and proteins that result from spontaneous decomposition of normal L-aspartyl and L-asparaginyl residues. It plays a role in the repair and/or degradation of damaged proteins. The polypeptide is Protein-L-isoaspartate O-methyltransferase 2 (Nitrosococcus oceani (strain ATCC 19707 / BCRC 17464 / JCM 30415 / NCIMB 11848 / C-107)).